Here is a 266-residue protein sequence, read N- to C-terminus: 2-C-methyl-D-erythritol 4-phosphate cytidylyltransferase (266 aa).

The segment at 229-266 (NRDCGPGTRDPESAHPQSSVSASAFSGPGSRAPGPEEI) is disordered. Residues 243-252 (HPQSSVSASA) are compositionally biased toward polar residues.

The protein belongs to the IspD/TarI cytidylyltransferase family. IspD subfamily.

The enzyme catalyses 2-C-methyl-D-erythritol 4-phosphate + CTP + H(+) = 4-CDP-2-C-methyl-D-erythritol + diphosphate. It participates in isoprenoid biosynthesis; isopentenyl diphosphate biosynthesis via DXP pathway; isopentenyl diphosphate from 1-deoxy-D-xylulose 5-phosphate: step 2/6. Functionally, catalyzes the formation of 4-diphosphocytidyl-2-C-methyl-D-erythritol from CTP and 2-C-methyl-D-erythritol 4-phosphate (MEP). The protein is 2-C-methyl-D-erythritol 4-phosphate cytidylyltransferase of Xanthomonas axonopodis pv. citri (strain 306).